The primary structure comprises 424 residues: Cytoplasmic tRNA 2-thiolation protein 2 (424 aa).

The interval Pro357–Asp385 is disordered. A compositionally biased stretch (basic and acidic residues) spans Leu368–Asp385.

This sequence belongs to the CTU2/NCS2 family.

It is found in the cytoplasm. The protein operates within tRNA modification; 5-methoxycarbonylmethyl-2-thiouridine-tRNA biosynthesis. Functionally, plays a central role in 2-thiolation of mcm(5)S(2)U at tRNA wobble positions of tRNA(Lys), tRNA(Glu) and tRNA(Gln). May act by forming a heterodimer with NCS6 that ligates sulfur from thiocarboxylated URM1 onto the uridine of tRNAs at wobble position. Prior mcm(5) tRNA modification by the elongator complex is required for 2-thiolation. May also be involved in protein urmylation. The chain is Cytoplasmic tRNA 2-thiolation protein 2 from Yarrowia lipolytica (strain CLIB 122 / E 150) (Yeast).